Reading from the N-terminus, the 123-residue chain is uncharacterized protein (123 aa).

Disordered stretches follow at residues 1 to 33 (MAPP…RRRK) and 82 to 123 (EKAA…EDKS). Positions 18-33 (KLFKRRRVLSRDRRRK) are enriched in basic residues.

This is an uncharacterized protein from Mus musculus (Mouse).